We begin with the raw amino-acid sequence, 384 residues long: Alanine racemase (384 aa).

Lys42 functions as the Proton acceptor; specific for D-alanine in the catalytic mechanism. Lys42 carries the N6-(pyridoxal phosphate)lysine modification. Residue Arg140 coordinates substrate. The Proton acceptor; specific for L-alanine role is filled by Tyr271. Met319 is a substrate binding site.

The protein belongs to the alanine racemase family. In terms of assembly, homodimer. Pyridoxal 5'-phosphate serves as cofactor.

It carries out the reaction L-alanine = D-alanine. The protein operates within amino-acid biosynthesis; D-alanine biosynthesis; D-alanine from L-alanine: step 1/1. Functionally, catalyzes the interconversion of L-alanine and D-alanine. This chain is Alanine racemase (alr), found in Mycobacterium tuberculosis (strain CDC 1551 / Oshkosh).